Here is a 339-residue protein sequence, read N- to C-terminus: MSEFTLKTRLLAALEGKPVDKVPVCSVTQTGIVELMDEVGAAWPEAHTNPELMAKLAIANYELSGLEAVRLPYCLTVLGEAMGCEINMGTKNRQPSVTASPYPKNLDGAAVPADLLQRNRIPAVLEAIKIVREKVGPDVPIIGGMEGPVTLASDLISVKSFMKWSIKKTDLFEQALDISTEAAIAYANAMVEAGADVIAIADPVASPDLMSPDTFRQFLQSRLQKFSASVNSVTVLHICGKVNAILSDMADCGFEGLSVEEKIGDAAEGKKVIGDRARLVGNISSPFTLLPGPIDKIKAEAKVALEGGIDVLAPGCGIAPMTPLENIKALVAARDEYYA.

Zn(2+) is bound by residues His-237, Cys-239, and Cys-316.

The protein belongs to the uroporphyrinogen decarboxylase family. MtbA/mtaA subfamily. Requires Zn(2+) as cofactor.

The enzyme catalyses methyl-Co(III)-[methanol-specific corrinoid protein] + coenzyme M = Co(I)-[methanol-specific corrinoid protein] + methyl-coenzyme M + H(+). Functionally, methyltransferase involved in methanogenesis in the methanol pathway. Catalyzes the transfer of the methyl group from the methylated corrinoid protein MtaC to coenzyme M, forming the substrate for coenzyme-B sulfoethylthiotransferase. MtaC can be substituted by free cob(I)alamin in vitro. This Methanosarcina barkeri protein is Methylcobamide:CoM methyltransferase MtaA (mtaA).